The primary structure comprises 103 residues: MNHGRQSLLPTPNPRPGLRLLCVLVRKAGHPIAQPVAVSGLPAPWAALSGRWPLALPSPFLLRETRPVPASAEVLARCVRQRETHALCARARRLPTGGLTHAR.

This chain is 11.2 kDa protein, found in Pseudomonas phage Pf1 (Bacteriophage Pf1).